The sequence spans 239 residues: Probable transcriptional regulatory protein MG332 (239 aa).

It belongs to the TACO1 family.

The protein resides in the cytoplasm. This is Probable transcriptional regulatory protein MG332 from Mycoplasma genitalium (strain ATCC 33530 / DSM 19775 / NCTC 10195 / G37) (Mycoplasmoides genitalium).